The following is a 306-amino-acid chain: Low-density lipoprotein receptor class A domain-containing protein 4 (306 aa).

Over 1–64 (MPEAGFQATN…PPGIFNSELE (64 aa)) the chain is Lumenal. Residues 16–48 (KFTCTSGKCLYLGSLVCNQQNDCGDNSDEENCL) form the LDL-receptor class A domain. 2 disulfide bridges follow: Cys-19–Cys-38 and Cys-32–Cys-47. The helical transmembrane segment at 65 to 85 (FAQIIIIVVVVTVMVVVIVCL) threads the bilayer. Over 86–306 (LNHYKVSTRS…GKDRKPGNLV (221 aa)) the chain is Cytoplasmic. A PPxY motif 1 motif is present at residues 180-183 (PPPY). The short motif at 208–211 (PPNR) is the SMAD interaction motif (SIM) element. Positions 252–255 (PPTY) match the PPxY motif 2 motif. Residues 286–306 (NNAESTIVPIKGKDRKPGNLV) are disordered. Residues 296–306 (KGKDRKPGNLV) show a composition bias toward basic and acidic residues.

Belongs to the PMEPA1 family. In terms of assembly, interacts with PMEPA1. Interacts (via the SMAD interaction motif) with SMAD2 and SMAD3. As to expression, expressed in lymphocytes.

It localises to the early endosome membrane. In terms of biological role, functions as a negative regulator of TGF-beta signaling and thereby probably plays a role in cell proliferation, differentiation, apoptosis, motility, extracellular matrix production and immunosuppression. In the canonical TGF-beta pathway, ZFYVE9/SARA recruits the intracellular signal transducer and transcriptional modulators SMAD2 and SMAD3 to the TGF-beta receptor. Phosphorylated by the receptor, SMAD2 and SMAD3 then form a heteromeric complex with SMAD4 that translocates to the nucleus to regulate transcription. Through interaction with SMAD2 and SMAD3, LDLRAD4 may compete with ZFYVE9 and SMAD4 and prevent propagation of the intracellular signal. This Homo sapiens (Human) protein is Low-density lipoprotein receptor class A domain-containing protein 4 (LDLRAD4).